Reading from the N-terminus, the 261-residue chain is Cytochrome c oxidase subunit 3 (261 aa).

Over 1 to 15 the chain is Mitochondrial matrix; the sequence is MTHQTHAYHMVNPSP. A helical membrane pass occupies residues 16 to 34; the sequence is WPLTGALSALLMTSGLAMW. The Mitochondrial intermembrane segment spans residues 35-40; the sequence is FHFNST. The chain crosses the membrane as a helical span at residues 41–66; that stretch reads ILLMIGLTTNTLTMYQWWRDVIREST. The Mitochondrial matrix portion of the chain corresponds to 67–72; it reads FQGHHT. A helical membrane pass occupies residues 73–105; that stretch reads PTVQKGLRYGMILFIISEVLFFTGFFWAFYHSS. At 106 to 128 the chain is on the mitochondrial intermembrane side; that stretch reads LAPTPELGGCWPPTGIHPLNPLE. The helical transmembrane segment at 129–152 threads the bilayer; that stretch reads VPLLNTSVLLASGVSITWAHHSLM. Topologically, residues 153-155 are mitochondrial matrix; the sequence is EGN. The helical transmembrane segment at 156 to 183 threads the bilayer; the sequence is RYPMLQALFITIALGVYFTLLQASEYYE. Over 184–190 the chain is Mitochondrial intermembrane; that stretch reads APFTISD. A helical membrane pass occupies residues 191–223; that stretch reads GIYGSTFFVATGFHGLHVIIGSTFLIVCFFRQL. Residues 224 to 232 lie on the Mitochondrial matrix side of the membrane; sequence KFHFTSNHH. The helical transmembrane segment at 233-256 threads the bilayer; that stretch reads FGFEAAAWYWHFVDVVWLFLYVSI. Over 257 to 261 the chain is Mitochondrial intermembrane; the sequence is YWWGS.

The protein belongs to the cytochrome c oxidase subunit 3 family. Component of the cytochrome c oxidase (complex IV, CIV), a multisubunit enzyme composed of 14 subunits. The complex is composed of a catalytic core of 3 subunits MT-CO1, MT-CO2 and MT-CO3, encoded in the mitochondrial DNA, and 11 supernumerary subunits COX4I, COX5A, COX5B, COX6A, COX6B, COX6C, COX7A, COX7B, COX7C, COX8 and NDUFA4, which are encoded in the nuclear genome. The complex exists as a monomer or a dimer and forms supercomplexes (SCs) in the inner mitochondrial membrane with NADH-ubiquinone oxidoreductase (complex I, CI) and ubiquinol-cytochrome c oxidoreductase (cytochrome b-c1 complex, complex III, CIII), resulting in different assemblies (supercomplex SCI(1)III(2)IV(1) and megacomplex MCI(2)III(2)IV(2)).

It is found in the mitochondrion inner membrane. The catalysed reaction is 4 Fe(II)-[cytochrome c] + O2 + 8 H(+)(in) = 4 Fe(III)-[cytochrome c] + 2 H2O + 4 H(+)(out). Its function is as follows. Component of the cytochrome c oxidase, the last enzyme in the mitochondrial electron transport chain which drives oxidative phosphorylation. The respiratory chain contains 3 multisubunit complexes succinate dehydrogenase (complex II, CII), ubiquinol-cytochrome c oxidoreductase (cytochrome b-c1 complex, complex III, CIII) and cytochrome c oxidase (complex IV, CIV), that cooperate to transfer electrons derived from NADH and succinate to molecular oxygen, creating an electrochemical gradient over the inner membrane that drives transmembrane transport and the ATP synthase. Cytochrome c oxidase is the component of the respiratory chain that catalyzes the reduction of oxygen to water. Electrons originating from reduced cytochrome c in the intermembrane space (IMS) are transferred via the dinuclear copper A center (CU(A)) of subunit 2 and heme A of subunit 1 to the active site in subunit 1, a binuclear center (BNC) formed by heme A3 and copper B (CU(B)). The BNC reduces molecular oxygen to 2 water molecules using 4 electrons from cytochrome c in the IMS and 4 protons from the mitochondrial matrix. This Raphicerus melanotis (Cape grysbok) protein is Cytochrome c oxidase subunit 3 (MT-CO3).